The chain runs to 202 residues: Large ribosomal subunit protein uL18 (202 aa).

Belongs to the universal ribosomal protein uL18 family. In terms of assembly, part of the 50S ribosomal subunit. Contacts the 5S and 23S rRNAs.

In terms of biological role, this is one of the proteins that bind and probably mediate the attachment of the 5S RNA into the large ribosomal subunit, where it forms part of the central protuberance. The sequence is that of Large ribosomal subunit protein uL18 from Methanopyrus kandleri (strain AV19 / DSM 6324 / JCM 9639 / NBRC 100938).